The primary structure comprises 339 residues: Dihydroorotate dehydrogenase (quinone) (339 aa).

FMN is bound by residues 62–66 (AGMDK) and Thr-86. Lys-66 is a binding site for substrate. 111-115 (NRMGF) contributes to the substrate binding site. FMN is bound by residues Asn-139 and Asn-172. Asn-172 is a binding site for substrate. Residue Ser-175 is the Nucleophile of the active site. Position 177 (Asn-177) interacts with substrate. Positions 217 and 245 each coordinate FMN. Position 246 to 247 (246 to 247 (NT)) interacts with substrate. FMN is bound by residues Gly-268, Gly-297, and 318 to 319 (YS).

It belongs to the dihydroorotate dehydrogenase family. Type 2 subfamily. As to quaternary structure, monomer. Requires FMN as cofactor.

The protein resides in the cell membrane. It catalyses the reaction (S)-dihydroorotate + a quinone = orotate + a quinol. It participates in pyrimidine metabolism; UMP biosynthesis via de novo pathway; orotate from (S)-dihydroorotate (quinone route): step 1/1. In terms of biological role, catalyzes the conversion of dihydroorotate to orotate with quinone as electron acceptor. This is Dihydroorotate dehydrogenase (quinone) from Shewanella baltica (strain OS155 / ATCC BAA-1091).